A 344-amino-acid polypeptide reads, in one-letter code: Dihydroorotase (344 aa).

Zn(2+)-binding residues include His-13 and His-15. Substrate is bound by residues 15-17 (HLR) and Asn-41. Zn(2+) is bound by residues Lys-99, His-136, and His-174. Position 99 is an N6-carboxylysine (Lys-99). His-136 is a substrate binding site. Leu-219 lines the substrate pocket. Asp-247 lines the Zn(2+) pocket. The active site involves Asp-247. Substrate-binding residues include His-251 and Ala-263.

It belongs to the metallo-dependent hydrolases superfamily. DHOase family. Class II DHOase subfamily. As to quaternary structure, homodimer. Zn(2+) is required as a cofactor.

The enzyme catalyses (S)-dihydroorotate + H2O = N-carbamoyl-L-aspartate + H(+). The protein operates within pyrimidine metabolism; UMP biosynthesis via de novo pathway; (S)-dihydroorotate from bicarbonate: step 3/3. In terms of biological role, catalyzes the reversible cyclization of carbamoyl aspartate to dihydroorotate. The chain is Dihydroorotase from Microcystis aeruginosa (strain NIES-843 / IAM M-2473).